Here is a 146-residue protein sequence, read N- to C-terminus: VDLTAEEKAAVLALWGKVNEDEVGGEALGRLLVVYPWTQRFFDSFGDLSTPAAVLGNAKVKAHGKKVLHSFGDGVHNLDNLKGTYAALSELHCDKLHVDPENFRLLGNVLVVVLAQHFGQEFTPELQAAYQKVVAGVANALAHKYH.

Valine 1 is modified (N-acetylvaline). Residues 2 to 146 (DLTAEEKAAV…VANALAHKYH (145 aa)) form the Globin domain. Serine 44 is modified (phosphoserine). Lysine 59 is subject to N6-acetyllysine. A heme b-binding site is contributed by histidine 63. Lysine 82 bears the N6-acetyllysine mark. Histidine 92 is a binding site for heme b. Cysteine 93 is subject to S-nitrosocysteine. An N6-acetyllysine modification is found at lysine 144.

It belongs to the globin family. Heterotetramer of two alpha chains and two beta chains. Red blood cells.

Its function is as follows. Involved in oxygen transport from the lung to the various peripheral tissues. The sequence is that of Hemoglobin subunit beta (HBB) from Rhinoceros unicornis (Greater Indian rhinoceros).